The sequence spans 138 residues: Larval cuticle protein 1 (138 aa).

The N-terminal stretch at 1-16 is a signal peptide; that stretch reads MFKFVMVFAVLGVAAA. In terms of domain architecture, Chitin-binding type R&amp;R spans 49-110; the sequence is ADGFDADLLV…PVGAVLPTPP (62 aa).

Functionally, component of the larval cuticle. In Drosophila miranda (Fruit fly), this protein is Larval cuticle protein 1 (Lcp1).